The chain runs to 449 residues: AP-4 complex subunit mu-1 (449 aa).

The MHD domain maps to 184 to 448 (KNEVFLDVVE…LSHSNAYVIR (265 aa)).

It belongs to the adaptor complexes medium subunit family. In terms of assembly, adaptor protein complex 4 (AP-4) is a heterotetramer composed of two large adaptins (epsilon-type subunit AP4E1 and beta-type subunit AP4B1), a medium adaptin (mu-type subunit AP4M1) and a small adaptin (sigma-type AP4S1). Interacts with tyrosine-based sorting signals on the cytoplasmic tail of cargo proteins such as APP, ATG9A, LAMP2 and NAGPA. Interacts with the C-terminal domain of GRID2. Interacts with GRIA1 and GRIA2; the interaction is indirect via CACNG3. Interacts with CACNG3; CACNG3 associates GRIA1 and GRIA2 with the adaptor protein complex 4 (AP-4) to target them to the somatodendritic compartment of neurons. Interacts with HOOK1 and HOOK2; the interactions are direct, mediate the interaction between FTS-Hook-FHIP (FHF) complex and AP-4 and the perinuclear distribution of AP-4.

The protein localises to the golgi apparatus. It localises to the trans-Golgi network membrane. It is found in the early endosome. In terms of biological role, component of the adaptor protein complex 4 (AP-4). Adaptor protein complexes are vesicle coat components involved both in vesicle formation and cargo selection. They control the vesicular transport of proteins in different trafficking pathways. AP-4 forms a non clathrin-associated coat on vesicles departing the trans-Golgi network (TGN) and may be involved in the targeting of proteins from the trans-Golgi network (TGN) to the endosomal-lysosomal system. It is also involved in protein sorting to the basolateral membrane in epithelial cells and the proper asymmetric localization of somatodendritic proteins in neurons. Within AP-4, the mu-type subunit AP4M1 is directly involved in the recognition and binding of tyrosine-based sorting signals found in the cytoplasmic part of cargos. The adaptor protein complex 4 (AP-4) may also recognize other types of sorting signal. The polypeptide is AP-4 complex subunit mu-1 (Mus musculus (Mouse)).